Consider the following 165-residue polypeptide: Shikimate kinase (165 aa).

11–16 contacts ATP; the sequence is GAGKTT. Residue T15 coordinates Mg(2+). Positions 33, 57, and 78 each coordinate substrate. R116 provides a ligand contact to ATP. R134 contributes to the substrate binding site.

The protein belongs to the shikimate kinase family. Monomer. Mg(2+) serves as cofactor.

Its subcellular location is the cytoplasm. The enzyme catalyses shikimate + ATP = 3-phosphoshikimate + ADP + H(+). It participates in metabolic intermediate biosynthesis; chorismate biosynthesis; chorismate from D-erythrose 4-phosphate and phosphoenolpyruvate: step 5/7. Catalyzes the specific phosphorylation of the 3-hydroxyl group of shikimic acid using ATP as a cosubstrate. This is Shikimate kinase from Bacillus mycoides (strain KBAB4) (Bacillus weihenstephanensis).